The chain runs to 68 residues: UPF0435 protein SAB1812c (68 aa).

The protein belongs to the UPF0435 family.

This is UPF0435 protein SAB1812c from Staphylococcus aureus (strain bovine RF122 / ET3-1).